A 30-amino-acid chain; its full sequence is V-type proton ATPase catalytic subunit A isoform 1 (30 aa).

This sequence belongs to the ATPase alpha/beta chains family. As to quaternary structure, V-ATPase is a heteromultimeric enzyme composed of a peripheral catalytic V1 complex (main components: subunits A, B, C, D, E, and F) attached to an integral membrane V0 proton pore complex (main component: the proteolipid protein).

It carries out the reaction ATP + H2O + 4 H(+)(in) = ADP + phosphate + 5 H(+)(out). Functionally, catalytic subunit of the peripheral V1 complex of vacuolar ATPase. V-ATPase vacuolar ATPase is responsible for acidifying a variety of intracellular compartments in eukaryotic cells. This is V-type proton ATPase catalytic subunit A isoform 1 from Equisetum arvense (Field horsetail).